The chain runs to 350 residues: UDP-glucose 4-epimerase (350 aa).

NAD(+) contacts are provided by residues 13 to 15 (GYI), 34 to 38 (DNLCN), 67 to 68 (DI), Phe89, and Lys93. 133 to 135 (SAT) serves as a coordination point for substrate. The active-site Proton acceptor is Tyr158. NAD(+) contacts are provided by Lys162 and Tyr186. Substrate is bound by residues 186–188 (YFN), 207–209 (NNL), 225–227 (SVY), Arg240, and 303–306 (RSGD).

This sequence belongs to the NAD(P)-dependent epimerase/dehydratase family. In terms of assembly, homodimer. The cofactor is NAD(+).

The catalysed reaction is UDP-alpha-D-glucose = UDP-alpha-D-galactose. The enzyme catalyses UDP-N-acetyl-alpha-D-glucosamine = UDP-N-acetyl-alpha-D-galactosamine. It participates in carbohydrate metabolism; galactose metabolism. Catalyzes two distinct but analogous reactions: the reversible epimerization of UDP-glucose to UDP-galactose and the reversible epimerization of UDP-N-acetylglucosamine to UDP-N-acetylgalactosamine. The reaction with UDP-Gal plays a critical role in the Leloir pathway of galactose catabolism in which galactose is converted to the glycolytic intermediate glucose 6-phosphate. It contributes to the catabolism of dietary galactose and enables the endogenous biosynthesis of both UDP-Gal and UDP-GalNAc when exogenous sources are limited. Both UDP-sugar interconversions are important in the synthesis of glycoproteins and glycolipids. The polypeptide is UDP-glucose 4-epimerase (Gale) (Drosophila melanogaster (Fruit fly)).